The sequence spans 474 residues: BPI fold-containing family B member 1 (474 aa).

Positions 1 to 21 are cleaved as a signal peptide; sequence MAGPWIITLLCGLLGATLVQA. 4 N-linked (GlcNAc...) asparagine glycosylation sites follow: asparagine 153, asparagine 160, asparagine 263, and asparagine 400. A disulfide bridge connects residues cysteine 157 and cysteine 200.

Belongs to the BPI/LBP/Plunc superfamily. Plunc family. In terms of tissue distribution, expressed in tongue, lung, thymus, and stomach. Expressed in epithelia of palate, anterior pharynx, trachea and upper bronchi. Expressed in distal tip of papillae in the anterior third of the tongue and in serous cells of von Ebner glands in the posterior third of the tongue. Expressed in columnar epithelium of the duodenum in embryonic gut at 16.5 dpc.

The protein localises to the secreted. Its function is as follows. May play a role in innate immunity in mouth, nose and lungs. Binds bacterial lipopolysaccharide (LPS) and modulates the cellular responses to LPS. May be involved in formation of the left-right axis in the node of the developing embryo. This chain is BPI fold-containing family B member 1 (Bpifb1), found in Mus musculus (Mouse).